A 582-amino-acid chain; its full sequence is MQPIRMLSSSLSSQISAGEVIERPSSVIKELLENSIDAQAKNIDISVERSGLNSITVKDDGFGIEKDQLLLAISRHATSKINRLSDLDNINTFGFRGEALASIRAVSRMKLISCSQNSNIAWSIYSEGFSNHTLLQPIAHPIGTSIIVDNLFYNIPVRLKFIKNERSEFLKIDETIKKIALSNFGINIFFKKDKKLFVSYKAITKNNNKIHRLKTVFNQIDLNYVLEIKEKMHNITLFGWLIFPSSLSSTFKKIQYCYVNNRFVYNNLIKSAVFNSFYEIIGNKRSTSFILYLTLPSNEIDINIHPTKNEIKFHKSNIIYFFVYQSILSSLKKCKIKYISNNFFLKTHSNKCKNNNSDSLNTKLVSQIHSKYEKKDLYKDVISTDLFKINSQRFLKEYFFSFGKLLIVFQKYYGLMYYSNTFSLISFPLAKKIVEQYKLRSAIKNNMIPEIFSYNFLYFITFKQNKILSNNLKLLLKFGFNLILKEKYFFLKTIPIFLKNQNLDVLLSSFFSFIFFKKKIYIKDIIKWFDTTILIEKNSWNYEDGISILLEIEYFCPSIFKKPPLKLLQKINVDEVLCILKV.

It belongs to the DNA mismatch repair MutL/HexB family.

This protein is involved in the repair of mismatches in DNA. It is required for dam-dependent methyl-directed DNA mismatch repair. May act as a 'molecular matchmaker', a protein that promotes the formation of a stable complex between two or more DNA-binding proteins in an ATP-dependent manner without itself being part of a final effector complex. This Buchnera aphidicola subsp. Schizaphis graminum (strain Sg) protein is DNA mismatch repair protein MutL.